The following is a 410-amino-acid chain: Tryptophan synthase beta chain (410 aa).

At Lys-99 the chain carries N6-(pyridoxal phosphate)lysine.

It belongs to the TrpB family. Tetramer of two alpha and two beta chains. The cofactor is pyridoxal 5'-phosphate.

The catalysed reaction is (1S,2R)-1-C-(indol-3-yl)glycerol 3-phosphate + L-serine = D-glyceraldehyde 3-phosphate + L-tryptophan + H2O. Its pathway is amino-acid biosynthesis; L-tryptophan biosynthesis; L-tryptophan from chorismate: step 5/5. Its function is as follows. The beta subunit is responsible for the synthesis of L-tryptophan from indole and L-serine. The polypeptide is Tryptophan synthase beta chain (Pseudomonas fluorescens (strain Pf0-1)).